The following is a 137-amino-acid chain: Large ribosomal subunit protein uL22 (137 aa).

The protein belongs to the universal ribosomal protein uL22 family. As to quaternary structure, part of the 50S ribosomal subunit.

Its function is as follows. This protein binds specifically to 23S rRNA; its binding is stimulated by other ribosomal proteins, e.g. L4, L17, and L20. It is important during the early stages of 50S assembly. It makes multiple contacts with different domains of the 23S rRNA in the assembled 50S subunit and ribosome. In terms of biological role, the globular domain of the protein is located near the polypeptide exit tunnel on the outside of the subunit, while an extended beta-hairpin is found that lines the wall of the exit tunnel in the center of the 70S ribosome. The protein is Large ribosomal subunit protein uL22 of Flavobacterium psychrophilum (strain ATCC 49511 / DSM 21280 / CIP 103535 / JIP02/86).